A 175-amino-acid chain; its full sequence is Co-chaperone protein HscB homolog (175 aa).

The J domain maps to 2-76 (NYFALFNLTP…RAEHMLELRG (75 aa)).

Belongs to the HscB family. Interacts with HscA and stimulates its ATPase activity.

Its function is as follows. Co-chaperone involved in the maturation of iron-sulfur cluster-containing proteins. Seems to help targeting proteins to be folded toward HscA. In Pseudoalteromonas atlantica (strain T6c / ATCC BAA-1087), this protein is Co-chaperone protein HscB homolog.